A 268-amino-acid polypeptide reads, in one-letter code: Type II methyltransferase M2.DpnII (268 aa).

Belongs to the N(4)/N(6)-methyltransferase family. Homodimer.

It carries out the reaction a 2'-deoxyadenosine in DNA + S-adenosyl-L-methionine = an N(6)-methyl-2'-deoxyadenosine in DNA + S-adenosyl-L-homocysteine + H(+). Its function is as follows. A beta subtype methylase that recognizes the single- or double-stranded sequence 5'-GATC-3', methylates A-2 on one or both strands (respectively), and protects the DNA from cleavage by the DpnII endonuclease. Further methylates DNA that is already methylated at 5'-GATC-3' sites. Essential for establishment of a previously unmethylated plasmid transformed into the cell as single-stranded DNA, enhances plasmid transfer to DpnII-containing strains of Streptococcus pneumoniae. This Streptococcus pneumoniae protein is Type II methyltransferase M2.DpnII.